A 135-amino-acid polypeptide reads, in one-letter code: Large ribosomal subunit protein uL16c (135 aa).

The protein belongs to the universal ribosomal protein uL16 family. In terms of assembly, part of the 50S ribosomal subunit.

The protein resides in the plastid. Its subcellular location is the chloroplast. The polypeptide is Large ribosomal subunit protein uL16c (Oenothera argillicola (Appalachian evening primrose)).